The sequence spans 929 residues: ATP-dependent RNA helicase DDX42 (929 aa).

An N6-acetyllysine modification is found at K5. R12 is subject to Omega-N-methylarginine. 2 disordered regions span residues 25 to 119 (KKEE…LEAF) and 182 to 203 (EYDS…LPPI). A compositionally biased stretch (low complexity) spans 35 to 52 (SHSAFGAASSSSGFGKSA). S58 bears the Phosphoserine mark. A compositionally biased stretch (acidic residues) spans 70 to 84 (DEENAYFEDEEEDSS). Phosphoserine is present on residues S96, S104, S109, and S111. The stretch at 116-157 (LEAFMAEVEDQAARDMKRLEEKDKERKNVKGIRDDIEEEDDQ) forms a coiled coil. S185 is modified (phosphoserine). The Q motif signature appears at 253–281 (SSFAHFGFDEQLMHQIRKSEYTQPTPIQC). Residues 284–459 (VPVALSGRDM…RDILIDPIRV (176 aa)) enclose the Helicase ATP-binding domain. 297-304 (AKTGSGKT) provides a ligand contact to ATP. The DEAD box motif lies at 407–410 (DEAD). A Helicase C-terminal domain is found at 487-632 (WLTRRLVEFT…HVSKELLDLA (146 aa)). 2 disordered regions span residues 662-682 (ERPG…VMSN) and 723-929 (GTSS…RWDS). A compositionally biased stretch (low complexity) spans 723–737 (GTSSAGASGWTSAGS). Polar residues-rich tracts occupy residues 738 to 777 (LNSV…SSAP) and 787 to 798 (GVNNTASGNNSR). The tract at residues 739-828 (NSVPTNSAQQ…RHSHGDGGNR (90 aa)) is necessary for interaction with TP53BP2. Residues 821–911 (SHGDGGNRHG…KVDSKTDKTP (91 aa)) are compositionally biased toward basic and acidic residues. Residue K894 forms a Glycyl lysine isopeptide (Lys-Gly) (interchain with G-Cter in SUMO2) linkage.

It belongs to the DEAD box helicase family. DDX42 subfamily. In terms of assembly, transient component of the SF3B subcomplex of the 17S U2 SnRNP complex. Interacts (via the C-terminus) with TP53BP2; the interaction is not inhibitied by TP53BP2 ubiquitination and is independent of p53/TP53.

It localises to the cytoplasm. Its subcellular location is the nucleus. The enzyme catalyses ATP + H2O = ADP + phosphate + H(+). Functionally, ATP-dependent RNA helicase that binds to partially double-stranded RNAs (dsRNAs) in order to unwind RNA secondary structures. Unwinding is promoted in the presence of single-strand binding proteins. Also mediates RNA duplex formation thereby displacing the single-strand RNA binding protein. ATP and ADP modulate its activity: ATP binding and hydrolysis by DDX42 triggers RNA strand separation, whereas the ADP-bound form of the protein triggers annealing of complementary RNA strands. Required for assembly of the 17S U2 SnRNP complex of the spliceosome, a large ribonucleoprotein complex that removes introns from transcribed pre-mRNAs: DDX42 associates transiently with the SF3B subcomplex of the 17S U2 SnRNP complex and is released after fulfilling its role in the assembly of 17S U2 SnRNP. Involved in the survival of cells by interacting with TP53BP2 and thereby counteracting the apoptosis-stimulating activity of TP53BP2. Relocalizes TP53BP2 to the cytoplasm. The sequence is that of ATP-dependent RNA helicase DDX42 (Ddx42) from Mus musculus (Mouse).